Reading from the N-terminus, the 109-residue chain is Protein reprimo (109 aa).

N-linked (GlcNAc...) asparagine glycosylation is found at asparagine 7 and asparagine 18. Residues 56-76 (VVQIAVMCVLSLTVVFGIFFL) form a helical membrane-spanning segment. A Phosphoserine modification is found at serine 98.

It belongs to the reprimo family.

It is found in the cytoplasm. The protein resides in the membrane. May be involved in the regulation of p53-dependent G2 arrest of the cell cycle. Seems to induce cell cycle arrest by inhibiting CDK1 activity and nuclear translocation of the CDC2 cyclin B1 complex. The sequence is that of Protein reprimo (RPRM) from Bos taurus (Bovine).